The chain runs to 925 residues: Calpain-B (925 aa).

The 300-residue stretch at 259–558 folds into the Calpain catalytic domain; it reads MFEDPDFPAT…FDRVEICNLS (300 aa). Catalysis depends on residues Cys314, His470, and Asn498. Residues 559 to 728 form a domain III region; sequence PDSLTEDQQH…TRNNMEENDD (170 aa). The disordered stretch occupies residues 723–753; that stretch reads MEENDDEVGFGETDDRIAPSLPPPTPKEEDD. Residues 729 to 748 are linker; sequence EVGFGETDDRIAPSLPPPTP. Residues 749 to 925 are domain IV; it reads KEEDDPQRIA…DDWLERTIYS (177 aa). 2 EF-hand domains span residues 796–831 and 826–861; these read FSKD…IAKW and TDIA…AGYH. Asp809, Asp811, Ser813, Arg815, Glu820, Asp839, Thr843, Ser845, and His850 together coordinate Ca(2+).

The protein belongs to the peptidase C2 family. Post-translationally, undergoes calcium-dependent autolytic cleavage between Asn-74 and Ala-75 and between Gln-224 and Asn-225 to produce two major products, calpain B catalytic subunit 1 and calpain B catalytic subunit 2. This autolysis is necessary for activation of the protein. Strongly expressed in follicular and border cells of the oocyte. Ubiquitously expressed in early embryos. Localized to the trachea and their orifices, and to the larynx of late embryos. Restricted to the salivary gland in third instar larvae.

The protein localises to the cytoplasm. Its subcellular location is the membrane. Activated by millimolar concentrations of calcium. Its function is as follows. Calcium-regulated non-lysosomal thiol-protease. This Drosophila melanogaster (Fruit fly) protein is Calpain-B.